We begin with the raw amino-acid sequence, 522 residues long: Glucans biosynthesis protein G (522 aa).

The first 33 residues, 1–33 (MLDNKFGFKQRVASLRWLSAAIMLSVSAVPAWA), serve as a signal peptide directing secretion.

Belongs to the OpgD/OpgG family.

The protein resides in the periplasm. It participates in glycan metabolism; osmoregulated periplasmic glucan (OPG) biosynthesis. Its function is as follows. Involved in the biosynthesis of osmoregulated periplasmic glucans (OPGs). This chain is Glucans biosynthesis protein G, found in Pectobacterium carotovorum subsp. carotovorum (strain PC1).